We begin with the raw amino-acid sequence, 700 residues long: Elongation factor G (700 aa).

The 277-residue stretch at 10 to 286 (TKVRNIGIMA…AVVDYLPSPL (277 aa)) folds into the tr-type G domain. Residues 19–26 (AHIDAGKT), 83–87 (DTPGH), and 137–140 (NKMD) contribute to the GTP site.

The protein belongs to the TRAFAC class translation factor GTPase superfamily. Classic translation factor GTPase family. EF-G/EF-2 subfamily.

Its subcellular location is the cytoplasm. Functionally, catalyzes the GTP-dependent ribosomal translocation step during translation elongation. During this step, the ribosome changes from the pre-translocational (PRE) to the post-translocational (POST) state as the newly formed A-site-bound peptidyl-tRNA and P-site-bound deacylated tRNA move to the P and E sites, respectively. Catalyzes the coordinated movement of the two tRNA molecules, the mRNA and conformational changes in the ribosome. This chain is Elongation factor G, found in Saccharopolyspora erythraea (strain ATCC 11635 / DSM 40517 / JCM 4748 / NBRC 13426 / NCIMB 8594 / NRRL 2338).